The chain runs to 432 residues: Queuine tRNA-ribosyltransferase accessory subunit 2 (432 aa).

Residues cysteine 329, cysteine 331, cysteine 334, and histidine 360 each contribute to the Zn(2+) site. A disordered region spans residues 390-432 (GQKSLPPYEPPKEEKLPMPAAQKAELMEPMEDLGEKQNKKQRA). Basic and acidic residues predominate over residues 422–432 (LGEKQNKKQRA).

It belongs to the queuine tRNA-ribosyltransferase family. QTRT2 subfamily. In terms of assembly, heterodimer of a catalytic subunit and an accessory subunit. Requires Zn(2+) as cofactor.

The protein resides in the cytoplasm. In terms of biological role, non-catalytic subunit of the queuine tRNA-ribosyltransferase (TGT) that catalyzes the base-exchange of a guanine (G) residue with queuine (Q) at position 34 (anticodon wobble position) in tRNAs with GU(N) anticodons (tRNA-Asp, -Asn, -His and -Tyr), resulting in the hypermodified nucleoside queuosine (7-(((4,5-cis-dihydroxy-2-cyclopenten-1-yl)amino)methyl)-7-deazaguanosine). The chain is Queuine tRNA-ribosyltransferase accessory subunit 2 from Anopheles gambiae (African malaria mosquito).